A 429-amino-acid chain; its full sequence is UPF0761 membrane protein ABO_1543 (429 aa).

The next 6 helical transmembrane spans lie at 45–65 (LFAI…VPAL), 102–122 (LTVL…STVE), 141–161 (LLMY…GLAI), 184–204 (WLAV…YTVV), 216–236 (LGAA…TFFI), and 256–278 (LLWI…ALVV).

It belongs to the UPF0761 family.

It localises to the cell inner membrane. The protein is UPF0761 membrane protein ABO_1543 of Alcanivorax borkumensis (strain ATCC 700651 / DSM 11573 / NCIMB 13689 / SK2).